The primary structure comprises 153 residues: Cytochrome c-554 (153 aa).

A signal peptide spans 1–20 (MRPIPALALTFSLVAMPALA). Gln-21 is modified (pyrrolidone carboxylic acid). 4 residues coordinate heme c: Met-37, Cys-142, Cys-145, and His-146.

In terms of processing, binds 1 heme c group covalently per subunit.

It localises to the periplasm. Its function is as follows. Monoheme c-type cytochrome, that is particularly expressed when cells generate energy via aerobic respiration. The chain is Cytochrome c-554 (cycF) from Cereibacter sphaeroides (strain ATCC 17023 / DSM 158 / JCM 6121 / CCUG 31486 / LMG 2827 / NBRC 12203 / NCIMB 8253 / ATH 2.4.1.) (Rhodobacter sphaeroides).